Here is a 127-residue protein sequence, read N- to C-terminus: D-ribose pyranase (127 aa).

H20 (proton donor) is an active-site residue. Residues D28, H94, and 116–118 (YSN) each bind substrate.

The protein belongs to the RbsD / FucU family. RbsD subfamily. In terms of assembly, homodecamer.

It localises to the cytoplasm. It carries out the reaction beta-D-ribopyranose = beta-D-ribofuranose. It participates in carbohydrate metabolism; D-ribose degradation; D-ribose 5-phosphate from beta-D-ribopyranose: step 1/2. In terms of biological role, catalyzes the interconversion of beta-pyran and beta-furan forms of D-ribose. In Cutibacterium acnes (strain DSM 16379 / KPA171202) (Propionibacterium acnes), this protein is D-ribose pyranase.